The chain runs to 247 residues: 1-(5-phosphoribosyl)-5-[(5-phosphoribosylamino)methylideneamino] imidazole-4-carboxamide isomerase (247 aa).

The active-site Proton acceptor is the Asp-8. The active-site Proton donor is the Asp-130.

This sequence belongs to the HisA/HisF family.

It localises to the cytoplasm. It catalyses the reaction 1-(5-phospho-beta-D-ribosyl)-5-[(5-phospho-beta-D-ribosylamino)methylideneamino]imidazole-4-carboxamide = 5-[(5-phospho-1-deoxy-D-ribulos-1-ylimino)methylamino]-1-(5-phospho-beta-D-ribosyl)imidazole-4-carboxamide. It functions in the pathway amino-acid biosynthesis; L-histidine biosynthesis; L-histidine from 5-phospho-alpha-D-ribose 1-diphosphate: step 4/9. This chain is 1-(5-phosphoribosyl)-5-[(5-phosphoribosylamino)methylideneamino] imidazole-4-carboxamide isomerase, found in Stutzerimonas stutzeri (strain A1501) (Pseudomonas stutzeri).